The chain runs to 344 residues: Serine proteinase inhibitor 2 (344 aa).

This sequence belongs to the serpin family. Poxviruses subfamily.

The protein localises to the host cytoplasm. In terms of biological role, viral serpin that inhibits both cysteine and serine proteinases involved in the regulation of host inflammatory and apoptosis processes. Major anti-apoptotic protein which inhibits both intrinsic and extrinsic pathways and strongly cleaves host CASP1 and CASP8 but is a rather poor inhibitor of host CASP3. Prevents the proteolytic activity of host interleukin-1-beta converting enzyme (ICE) and ICE-like enzymes. Can also block apoptosis through host tumor necrosis factor (TNF) receptor. The inhibition of host ICE is an example of a 'cross-class' interaction, in which a serpin inhibits a non-serine proteinase. Also inhibits granzyme B. The chain is Serine proteinase inhibitor 2 (OPG199) from Cynomys gunnisoni (Gunnison's prairie dog).